We begin with the raw amino-acid sequence, 304 residues long: Tritrans,polycis-undecaprenyl-diphosphate synthase (geranylgeranyl-diphosphate specific) (304 aa).

Residue Asp33 is part of the active site. Asp33 is a binding site for Mg(2+). Substrate is bound by residues 34-37 (GNRR), Lys46, His50, and 78-80 (STE). Asn81 (proton acceptor) is an active-site residue. Substrate is bound by residues Phe82, Arg84, Arg203, and 209–211 (RTS).

This sequence belongs to the UPP synthase family. Homodimer. Mg(2+) is required as a cofactor.

It carries out the reaction geranylgeranyl diphosphate + 7 isopentenyl diphosphate = tri-trans,hepta-cis-undecaprenyl diphosphate + 7 diphosphate. Functionally, catalyzes the sequential condensation of isopentenyl diphosphate (IPP) with geranylgeranyl diphosphate (GGPP) to yield (2Z,6Z,10Z,14Z,18Z,22Z,26Z,30E,34E,38E)-undecaprenyl diphosphate (tritrans,heptacis-UPP). It is probably the precursor of glycosyl carrier lipids. The polypeptide is Tritrans,polycis-undecaprenyl-diphosphate synthase (geranylgeranyl-diphosphate specific) (Haloarcula marismortui (strain ATCC 43049 / DSM 3752 / JCM 8966 / VKM B-1809) (Halobacterium marismortui)).